A 62-amino-acid polypeptide reads, in one-letter code: DNA gyrase inhibitor YacG (62 aa).

Zn(2+)-binding residues include C9, C12, C27, and C31. Positions 43 to 53 (GYRIPGEKAPE) are enriched in basic and acidic residues. The tract at residues 43–62 (GYRIPGEKAPESGDEEPGDE) is disordered.

It belongs to the DNA gyrase inhibitor YacG family. In terms of assembly, interacts with GyrB. It depends on Zn(2+) as a cofactor.

Its function is as follows. Inhibits all the catalytic activities of DNA gyrase by preventing its interaction with DNA. Acts by binding directly to the C-terminal domain of GyrB, which probably disrupts DNA binding by the gyrase. The chain is DNA gyrase inhibitor YacG from Citrifermentans bemidjiense (strain ATCC BAA-1014 / DSM 16622 / JCM 12645 / Bem) (Geobacter bemidjiensis).